Here is a 176-residue protein sequence, read N- to C-terminus: NAD(P)H-quinone oxidoreductase subunit 6, chloroplastic (176 aa).

Helical transmembrane passes span 10–30 (FLLVFLGLGLILGGLGVVLLT), 32–52 (PIFSAFSLGLVLVCISLFYIL), 61–81 (AQLLIYVGAINVLILFAVMFM), 95–115 (VGNGLTSLICTSLFVLLITII), and 152–172 (FFLPFEFISIILLVALIGAIA).

It belongs to the complex I subunit 6 family. As to quaternary structure, NDH is composed of at least 16 different subunits, 5 of which are encoded in the nucleus.

It is found in the plastid. Its subcellular location is the chloroplast thylakoid membrane. The enzyme catalyses a plastoquinone + NADH + (n+1) H(+)(in) = a plastoquinol + NAD(+) + n H(+)(out). The catalysed reaction is a plastoquinone + NADPH + (n+1) H(+)(in) = a plastoquinol + NADP(+) + n H(+)(out). In terms of biological role, NDH shuttles electrons from NAD(P)H:plastoquinone, via FMN and iron-sulfur (Fe-S) centers, to quinones in the photosynthetic chain and possibly in a chloroplast respiratory chain. The immediate electron acceptor for the enzyme in this species is believed to be plastoquinone. Couples the redox reaction to proton translocation, and thus conserves the redox energy in a proton gradient. In Populus alba (White poplar), this protein is NAD(P)H-quinone oxidoreductase subunit 6, chloroplastic (ndhG).